Consider the following 94-residue polypeptide: Phosphoribosyl-ATP pyrophosphatase (94 aa).

The protein belongs to the PRA-PH family.

The protein resides in the cytoplasm. The catalysed reaction is 1-(5-phospho-beta-D-ribosyl)-ATP + H2O = 1-(5-phospho-beta-D-ribosyl)-5'-AMP + diphosphate + H(+). It participates in amino-acid biosynthesis; L-histidine biosynthesis; L-histidine from 5-phospho-alpha-D-ribose 1-diphosphate: step 2/9. This chain is Phosphoribosyl-ATP pyrophosphatase, found in Pyrobaculum neutrophilum (strain DSM 2338 / JCM 9278 / NBRC 100436 / V24Sta) (Thermoproteus neutrophilus).